The primary structure comprises 120 residues: Immunoglobulin lambda variable 2-14 (120 aa).

The signal sequence occupies residues 1–19 (MAWALLLLTLLTQGTGSWA). Pyrrolidone carboxylic acid is present on Q20. The framework-1 stretch occupies residues 20-44 (QSALTQPASVSGSPGQSITISCTGT). The Ig-like domain maps to 20–119 (QSALTQPASV…SSYTSSSTLH (100 aa)). C41 and C109 are disulfide-bonded. The segment at 45–53 (SSDVGGYNY) is complementarity-determining-1. Positions 54–70 (VSWYQQHPGKAPKLMIY) are framework-2. Positions 71-73 (EVS) are complementarity-determining-2. A framework-3 region spans residues 74 to 109 (NRPSGVSNRFSGSKSGNTASLTISGLQAEDEADYYC). The tract at residues 110-119 (SSYTSSSTLH) is complementarity-determining-3.

In terms of assembly, immunoglobulins are composed of two identical heavy chains and two identical light chains; disulfide-linked.

Its subcellular location is the secreted. It is found in the cell membrane. Its function is as follows. V region of the variable domain of immunoglobulin light chains that participates in the antigen recognition. Immunoglobulins, also known as antibodies, are membrane-bound or secreted glycoproteins produced by B lymphocytes. In the recognition phase of humoral immunity, the membrane-bound immunoglobulins serve as receptors which, upon binding of a specific antigen, trigger the clonal expansion and differentiation of B lymphocytes into immunoglobulins-secreting plasma cells. Secreted immunoglobulins mediate the effector phase of humoral immunity, which results in the elimination of bound antigens. The antigen binding site is formed by the variable domain of one heavy chain, together with that of its associated light chain. Thus, each immunoglobulin has two antigen binding sites with remarkable affinity for a particular antigen. The variable domains are assembled by a process called V-(D)-J rearrangement and can then be subjected to somatic hypermutations which, after exposure to antigen and selection, allow affinity maturation for a particular antigen. The sequence is that of Immunoglobulin lambda variable 2-14 from Homo sapiens (Human).